Reading from the N-terminus, the 283-residue chain is F-box only protein 27 (283 aa).

A disordered region spans residues 1-23; that stretch reads MGASVSRGRAARVPAPEPEPEEA. Residues 23-70 enclose the F-box domain; that stretch reads ALDLSQLPPELLLVVLSHVPPRTLLGRCRQVCRGWRALVDGQALWLLI. In terms of domain architecture, FBA spans 104–280; the sequence is FCARRPIGRN…VTNSSVIVRV (177 aa).

Part of a SCF (SKP1-cullin-F-box) protein ligase complex. Interacts with SKP1 and CUL1. Predominantly expressed in brain, heart and kidney. Expressed at lower levels in liver and lung.

Its function is as follows. Substrate-recognition component of the SCF (SKP1-CUL1-F-box protein)-type E3 ubiquitin ligase complex. Able to recognize and bind denatured glycoproteins, which are modified with complex-type oligosaccharides. The protein is F-box only protein 27 (FBXO27) of Homo sapiens (Human).